The primary structure comprises 121 residues: MNNAPHLYFAWQQLVEKSQLMLRLATEEQWDELIASEMAYVNAVQEIAHLTEEVAPSTTMQEQLRPMLHLILDNESKVKQLLQIRMDELAKLVGQSSVQKSVLSAYGDQGGFVLAPQDNLF.

Positions 1–50 (MNNAPHLYFAWQQLVEKSQLMLRLATEEQWDELIASEMAYVNAVQEIAHL) are required for homodimerization. The interval 60–98 (MQEQLRPMLHLILDNESKVKQLLQIRMDELAKLVGQSSV) is fliD binding.

It belongs to the FliT family. Homodimer. Interacts with FliD and FlhC.

It localises to the cytoplasm. The protein resides in the cytosol. Functionally, dual-function protein that regulates the transcription of class 2 flagellar operons and that also acts as an export chaperone for the filament-capping protein FliD. As a transcriptional regulator, acts as an anti-FlhDC factor; it directly binds FlhC, thus inhibiting the binding of the FlhC/FlhD complex to class 2 promoters, resulting in decreased expression of class 2 flagellar operons. As a chaperone, effects FliD transition to the membrane by preventing its premature polymerization, and by directing it to the export apparatus. The protein is Flagellar protein FliT of Shigella flexneri serotype 5b (strain 8401).